A 461-amino-acid chain; its full sequence is Methylenetetrahydrofolate--tRNA-(uracil-5-)-methyltransferase TrmFO (461 aa).

Residue Gly16–Gly21 participates in FAD binding.

Belongs to the MnmG family. TrmFO subfamily. It depends on FAD as a cofactor.

It localises to the cytoplasm. The enzyme catalyses uridine(54) in tRNA + (6R)-5,10-methylene-5,6,7,8-tetrahydrofolate + NADH + H(+) = 5-methyluridine(54) in tRNA + (6S)-5,6,7,8-tetrahydrofolate + NAD(+). It carries out the reaction uridine(54) in tRNA + (6R)-5,10-methylene-5,6,7,8-tetrahydrofolate + NADPH + H(+) = 5-methyluridine(54) in tRNA + (6S)-5,6,7,8-tetrahydrofolate + NADP(+). In terms of biological role, catalyzes the folate-dependent formation of 5-methyl-uridine at position 54 (M-5-U54) in all tRNAs. This is Methylenetetrahydrofolate--tRNA-(uracil-5-)-methyltransferase TrmFO from Parasynechococcus marenigrum (strain WH8102).